A 448-amino-acid polypeptide reads, in one-letter code: Integrator complex subunit 15 (448 aa).

The protein belongs to the Integrator subunit 15 family. As to quaternary structure, component of the Integrator complex, composed of core subunits INTS1, INTS2, INTS3, INTS4, INTS5, INTS6, INTS7, INTS8, INTS9/RC74, INTS10, INTS11/CPSF3L, INTS12, INTS13, INTS14 and INTS15. The core complex associates with protein phosphatase 2A subunits PPP2CA and PPP2R1A, to form the Integrator-PP2A (INTAC) complex. INTS15 is part of the tail subcomplex, composed of INTS10, INTS13, INTS14 and INTS15.

It localises to the nucleus. It is found in the chromosome. Functionally, component of the integrator complex, a multiprotein complex that terminates RNA polymerase II (Pol II) transcription in the promoter-proximal region of genes. The integrator complex provides a quality checkpoint during transcription elongation by driving premature transcription termination of transcripts that are unfavorably configured for transcriptional elongation: the complex terminates transcription by (1) catalyzing dephosphorylation of the C-terminal domain (CTD) of Pol II subunit POLR2A/RPB1 and SUPT5H/SPT5, (2) degrading the exiting nascent RNA transcript via endonuclease activity and (3) promoting the release of Pol II from bound DNA. The integrator complex is also involved in terminating the synthesis of non-coding Pol II transcripts, such as enhancer RNAs (eRNAs), small nuclear RNAs (snRNAs), telomerase RNAs and long non-coding RNAs (lncRNAs). INTS15 is part of the integrator tail module that acts as a platform for the recruitment of transcription factors at promoters. Within the integrator complex, INTS15 is required to bridge different integrator modules. The polypeptide is Integrator complex subunit 15 (Mus musculus (Mouse)).